We begin with the raw amino-acid sequence, 383 residues long: 8-amino-7-oxononanoate synthase (383 aa).

Residue Arg-21 participates in substrate binding. 108-109 (GY) is a binding site for pyridoxal 5'-phosphate. His-133 is a binding site for substrate. Residues Ser-179, His-207, and Thr-233 each contribute to the pyridoxal 5'-phosphate site. The residue at position 236 (Lys-236) is an N6-(pyridoxal phosphate)lysine. Thr-350 serves as a coordination point for substrate.

The protein belongs to the class-II pyridoxal-phosphate-dependent aminotransferase family. BioF subfamily. As to quaternary structure, homodimer. Requires pyridoxal 5'-phosphate as cofactor.

It carries out the reaction 6-carboxyhexanoyl-[ACP] + L-alanine + H(+) = (8S)-8-amino-7-oxononanoate + holo-[ACP] + CO2. The protein operates within cofactor biosynthesis; biotin biosynthesis. Its function is as follows. Catalyzes the decarboxylative condensation of pimeloyl-[acyl-carrier protein] and L-alanine to produce 8-amino-7-oxononanoate (AON), [acyl-carrier protein], and carbon dioxide. The protein is 8-amino-7-oxononanoate synthase of Yersinia pseudotuberculosis serotype O:1b (strain IP 31758).